The sequence spans 286 residues: Uridylate cyclase (286 aa).

The Guanylate cyclase domain maps to 90–223; the sequence is TAIFVDIRKS…DAVTKAANMS (134 aa). Phe-93 is an a ribonucleoside 5'-triphosphate binding site. Positions 95, 96, and 140 each coordinate Mn(2+).

This sequence belongs to the adenylyl cyclase class-4/guanylyl cyclase family. Pyrimidine cyclase subfamily. As to quaternary structure, homodimer. Mn(2+) is required as a cofactor.

The protein resides in the cytoplasm. The enzyme catalyses UTP = 3',5'-cyclic UMP + diphosphate. In terms of biological role, pycsar (pyrimidine cyclase system for antiphage resistance) provides immunity against bacteriophage. The pyrimidine cyclase (PycC) synthesizes cyclic nucleotides in response to infection; these serve as specific second messenger signals. The signals activate the adjacent effector, leading to bacterial cell death and abortive phage infection. A clade C Pycsar system. The pyrimidine cyclase gene of a two-gene Pycsar system, weakly generates cyclic UMP (cUMP) from UTP, has little to no activity on ATP, CTP or GTP. Expression of this and adjacent effector TpPycTM (AC A0A1T4LJG1) probably confers resistance to bacteriophage. The genes are probably only expressed in response to bacteriophage infection. This chain is Uridylate cyclase, found in Treponema porcinum.